The primary structure comprises 363 residues: Probable mannitol dehydrogenase 3 (363 aa).

Zn(2+)-binding residues include C51, H73, C104, C107, C110, C118, and C168.

It belongs to the zinc-containing alcohol dehydrogenase family. Zn(2+) serves as cofactor.

It carries out the reaction D-mannitol + NAD(+) = D-mannose + NADH + H(+). In terms of biological role, oxidizes mannitol to mannose. Provides the initial step by which translocated mannitol is committed to central metabolism and, by regulating mannitol pool size, is important in regulating salt tolerance at the cellular level. The protein is Probable mannitol dehydrogenase 3 (CAD3) of Stylosanthes humilis (Townsville stylo).